The following is a 388-amino-acid chain: Succinyl-diaminopimelate desuccinylase (388 aa).

Histidine 84 contributes to the Zn(2+) binding site. Aspartate 86 is a catalytic residue. Aspartate 115 contacts Zn(2+). Residue glutamate 146 is the Proton acceptor of the active site. Zn(2+) contacts are provided by glutamate 147, glutamate 175, and histidine 360.

The protein belongs to the peptidase M20A family. DapE subfamily. Homodimer. It depends on Zn(2+) as a cofactor. The cofactor is Co(2+).

It catalyses the reaction N-succinyl-(2S,6S)-2,6-diaminopimelate + H2O = (2S,6S)-2,6-diaminopimelate + succinate. It participates in amino-acid biosynthesis; L-lysine biosynthesis via DAP pathway; LL-2,6-diaminopimelate from (S)-tetrahydrodipicolinate (succinylase route): step 3/3. Functionally, catalyzes the hydrolysis of N-succinyl-L,L-diaminopimelic acid (SDAP), forming succinate and LL-2,6-diaminopimelate (DAP), an intermediate involved in the bacterial biosynthesis of lysine and meso-diaminopimelic acid, an essential component of bacterial cell walls. The sequence is that of Succinyl-diaminopimelate desuccinylase from Helicobacter pylori (strain J99 / ATCC 700824) (Campylobacter pylori J99).